A 636-amino-acid polypeptide reads, in one-letter code: 1-deoxy-D-xylulose-5-phosphate synthase (636 aa).

Thiamine diphosphate is bound by residues His-72 and 113–115 (GHA). A Mg(2+)-binding site is contributed by Asp-144. Thiamine diphosphate is bound by residues 145-146 (GS), Asn-174, Tyr-287, and Glu-370. Position 174 (Asn-174) interacts with Mg(2+).

The protein belongs to the transketolase family. DXPS subfamily. In terms of assembly, homodimer. It depends on Mg(2+) as a cofactor. Thiamine diphosphate serves as cofactor.

It catalyses the reaction D-glyceraldehyde 3-phosphate + pyruvate + H(+) = 1-deoxy-D-xylulose 5-phosphate + CO2. It participates in metabolic intermediate biosynthesis; 1-deoxy-D-xylulose 5-phosphate biosynthesis; 1-deoxy-D-xylulose 5-phosphate from D-glyceraldehyde 3-phosphate and pyruvate: step 1/1. Its function is as follows. Catalyzes the acyloin condensation reaction between C atoms 2 and 3 of pyruvate and glyceraldehyde 3-phosphate to yield 1-deoxy-D-xylulose-5-phosphate (DXP). The polypeptide is 1-deoxy-D-xylulose-5-phosphate synthase (Synechococcus elongatus (strain ATCC 33912 / PCC 7942 / FACHB-805) (Anacystis nidulans R2)).